The sequence spans 606 residues: Kelch-like protein 41 (606 aa).

At S3 the chain carries Phosphoserine. Residues 33 to 100 (IDCTLKAGDK…LYSASIDLND (68 aa)) enclose the BTB domain. The BACK domain maps to 135–237 (CLAILRLGLL…AEKYFKDHVE (103 aa)). 5 Kelch repeats span residues 346–398 (QVYV…EVDD), 399–447 (KIYV…SHNG), 448–495 (MIYC…IHKG), 497–542 (IVIA…SLAG), and 544–599 (LYAI…TRLN).

In terms of assembly, interacts with NRAP. Part of a complex that contains CUL3, RBX1 and KLHL41. Interacts with LASP1. Post-translationally, ubiquitinated by E3 ubiquitin ligase complex formed by CUL3 and RBX1 and probably targeted for proteasome-independent degradation. Quinone-induced oxidative stress increases its ubiquitination. In terms of tissue distribution, primarily expressed in skeletal muscle. Also found in heart and lung.

It localises to the cytoplasm. The protein resides in the cytoskeleton. The protein localises to the cell projection. Its subcellular location is the pseudopodium. It is found in the ruffle. It localises to the myofibril. The protein resides in the sarcomere. The protein localises to the m line. Its subcellular location is the sarcoplasmic reticulum membrane. It is found in the endoplasmic reticulum membrane. Involved in skeletal muscle development and differentiation. Regulates proliferation and differentiation of myoblasts and plays a role in myofibril assembly by promoting lateral fusion of adjacent thin fibrils into mature, wide myofibrils. Required for pseudopod elongation in transformed cells. The sequence is that of Kelch-like protein 41 (Klhl41) from Rattus norvegicus (Rat).